The primary structure comprises 120 residues: Crustacean hyperglycemic hormones 1 (120 aa).

An N-terminal signal peptide occupies residues 1–27 (MTAFRMVWSMLLASLLMLLVASSTAPA). Intrachain disulfides connect Cys53–Cys89, Cys69–Cys85, and Cys72–Cys98. Residue Val118 is modified to Valine amide.

This sequence belongs to the arthropod CHH/MIH/GIH/VIH hormone family.

It localises to the secreted. In terms of biological role, hormone found in the sinus gland of isopods and decapods which controls the blood sugar level. Has a secretagogue action over the amylase released from the midgut gland. May act as a stress hormone and may be involved in the control of molting and reproduction. This Penaeus monodon (Giant tiger prawn) protein is Crustacean hyperglycemic hormones 1 (CHH1).